Here is a 175-residue protein sequence, read N- to C-terminus: Large ribosomal subunit protein bL17m (175 aa).

Residues 1 to 8 (MRLSVCAA) constitute a mitochondrion transit peptide. The interval 155–175 (DLSQSQEASNHSSHTAQTPGI) is disordered. The segment covering 157 to 175 (SQSQEASNHSSHTAQTPGI) has biased composition (polar residues).

This sequence belongs to the bacterial ribosomal protein bL17 family. In terms of assembly, component of the mitochondrial ribosome large subunit (39S) which comprises a 16S rRNA and about 50 distinct proteins.

Its subcellular location is the mitochondrion. The protein is Large ribosomal subunit protein bL17m (MRPL17) of Pongo abelii (Sumatran orangutan).